The sequence spans 664 residues: E3 ubiquitin-protein ligase RNF139 (664 aa).

At A2 the chain carries N-acetylalanine. 12 consecutive transmembrane segments (helical) span residues 51 to 71 (IVLQ…VLIL), 85 to 105 (AFLL…HIDF), 125 to 145 (SLWM…VTLL), 154 to 174 (LIIL…PLHI), 178 to 198 (LVFT…AVKL), 293 to 313 (GMSA…LAFI), 323 to 343 (LGFV…LSGL), 356 to 376 (MCLL…PVLM), 390 to 410 (FPVL…SYVL), 420 to 440 (LFAA…SLTV), 469 to 489 (SIIV…TMMF), and 495 to 512 (IRAF…YLQA). The RING-type; atypical zinc-finger motif lies at 547–586 (CAICYHEFTTSARITPCNHYFHALCLRKWLYIQDTCPMCH). The segment covering 599-610 (SNVSNNNGFTPP) has biased composition (polar residues). Positions 599–664 (SNVSNNNGFT…AAEEFNDDTD (66 aa)) are disordered. Over residues 616–628 (EAVREAAAESDRE) the composition is skewed to basic and acidic residues. Over residues 629 to 639 (LNEDDSTDCDD) the composition is skewed to acidic residues. A Phosphoserine modification is found at S634. T635 and T663 each carry phosphothreonine.

Interacts with VHL. Interacts with MHC class I and HM13. Component of SCAP-SREBP complex composed of SREBF2, SCAP and RNF139; the complex hampers the interaction between SCAP and SEC24B, thereby reducing SREBF2 proteolytic processing. Interacts with SREBF2 (via C-terminal domain). Interacts with SCAP; the interaction inhibits the interaction of SCAP with SEC24B and hampering the ER to Golgi transport of the SCAP-SREBP complex. Interacts with SEC24B. Interacts with INSIG1 and INSIG2. Interacts with EIF3F and EIF3H; the interaction leads to protein translation inhibitions in a ubiquitination-dependent manner. Interacts with XBP1; the interaction induces ubiquitination and degradation of XBP1. Interacts with AUP1, AMFR and UBE2G2; interaction with AUP1 facilitates interaction of RNF139 with ubiquitin-conjugating enzyme UBE2G2 and ubiquitin ligase AMFR/gp78, leading to sterol-induced ubiquitination of HMGCR and its subsequent proteasomal degradation. In terms of processing, autoubiquitinated. Ubiquitination is induced by sterol and leads to ist degradation via the ubiquitin-proteasome pathway.

The protein localises to the endoplasmic reticulum membrane. It catalyses the reaction S-ubiquitinyl-[E2 ubiquitin-conjugating enzyme]-L-cysteine + [acceptor protein]-L-lysine = [E2 ubiquitin-conjugating enzyme]-L-cysteine + N(6)-ubiquitinyl-[acceptor protein]-L-lysine.. Its pathway is protein modification; protein ubiquitination. In terms of biological role, E3-ubiquitin ligase; acts as a negative regulator of cell proliferation through mechanisms involving G2/M arrest and cell death. Required for MHC class I ubiquitination in cells expressing the cytomegalovirus protein US2 before dislocation from the endoplasmic reticulum (ER). Affects SREBP processing by hindering the SREBP-SCAP complex translocation from the ER to the Golgi, thereby reducing SREBF2 target gene expression. Involved in the sterol-accelerated degradation of HMGCR. This is achieved through binding to INSIG1 and/or INSIG2 at the ER membrane. In addition, interaction of RNF139 with AUP1 facilitates interaction of RNF139 with ubiquitin-conjugating enzyme UBE2G2 and ubiquitin ligase AMFR, leading to ubiquitination of HMGCR. The ubiquitinated HMGCR is then released from the ER by the complex into the cytosol for subsequent destruction. Required for INSIG1 ubiquitination. May be required for EIF3 complex ubiquitination. This chain is E3 ubiquitin-protein ligase RNF139 (RNF139), found in Pongo abelii (Sumatran orangutan).